Here is a 127-residue protein sequence, read N- to C-terminus: UPF0166 protein PYRAB06660 (127 aa).

Belongs to the UPF0166 family.

This chain is UPF0166 protein PYRAB06660, found in Pyrococcus abyssi (strain GE5 / Orsay).